A 338-amino-acid polypeptide reads, in one-letter code: D-erythrose-4-phosphate dehydrogenase (338 aa).

Arg-11–Ile-12 is an NAD(+) binding site. Residues Ser-153–Thr-155, Arg-199, Thr-212–Lys-213, and Arg-235 each bind substrate. The Nucleophile role is filled by Cys-154. Asn-317 is an NAD(+) binding site.

The protein belongs to the glyceraldehyde-3-phosphate dehydrogenase family. Epd subfamily. In terms of assembly, homotetramer.

It localises to the cytoplasm. The catalysed reaction is D-erythrose 4-phosphate + NAD(+) + H2O = 4-phospho-D-erythronate + NADH + 2 H(+). It functions in the pathway cofactor biosynthesis; pyridoxine 5'-phosphate biosynthesis; pyridoxine 5'-phosphate from D-erythrose 4-phosphate: step 1/5. Functionally, catalyzes the NAD-dependent conversion of D-erythrose 4-phosphate to 4-phosphoerythronate. The protein is D-erythrose-4-phosphate dehydrogenase of Shewanella sp. (strain MR-4).